We begin with the raw amino-acid sequence, 377 residues long: Iris (377 aa).

2 N-linked (GlcNAc...) asparagine glycosylation sites follow: Asn-11 and Asn-226.

It belongs to the serpin family. As to expression, female saliva (at protein level). Female salivary gland (at protein level).

It is found in the secreted. Its function is as follows. Serine protease inhibitor with anticoagulant and immunosuppressive properties that can modulate blood feeding of ticks on vertebrate species. Strongly inhibits human leukocyte elastase (ELANE) and porcine pancreatic elastase. Moderately inhibits human tPA/tissue-type plasminogen activator (PLAT), coagulation factor Xa (F10), thrombin (F2) and trypsin. Does not inhibit human plasmin (PLG). Inhibits platelet aggregation. Inhibits the intrinsic pathway of blood coagulation in the host. Inhibits fibrinolysis in the host. Inhibits proliferation of mouse splenocytes. Decreases the number of IFN-gamma (IFNG)-producing human peripheral blood mononuclear cells (PBMCs) after stimulation with phytohemagglutinin A (PHA). Increases the number of IL10-producing human PBMCs after stimulation with lipopolysaccharides (LPS) with no significant effect on IL10 production. Inhibits production of IFNG, IL6, TNF-alpha (TNF) and CXCL8 by human PBMCs. Binds to monocyte/macrophage subpopulation of the host PBMCs. Increases both survival rate and survival time in mice with LPS-induced endotoxemic shock. The sequence is that of Iris from Ixodes ricinus (Common tick).